Consider the following 433-residue polypeptide: Enolase (433 aa).

Glutamine 167 serves as a coordination point for (2R)-2-phosphoglycerate. The active-site Proton donor is the glutamate 209. Mg(2+) is bound by residues aspartate 246, glutamate 291, and aspartate 318. (2R)-2-phosphoglycerate-binding residues include lysine 343, arginine 372, serine 373, and lysine 394. The active-site Proton acceptor is the lysine 343.

Belongs to the enolase family. Component of the RNA degradosome, a multiprotein complex involved in RNA processing and mRNA degradation. The cofactor is Mg(2+).

Its subcellular location is the cytoplasm. It localises to the secreted. The protein resides in the cell surface. The catalysed reaction is (2R)-2-phosphoglycerate = phosphoenolpyruvate + H2O. The protein operates within carbohydrate degradation; glycolysis; pyruvate from D-glyceraldehyde 3-phosphate: step 4/5. Catalyzes the reversible conversion of 2-phosphoglycerate (2-PG) into phosphoenolpyruvate (PEP). It is essential for the degradation of carbohydrates via glycolysis. The polypeptide is Enolase (Vibrio cholerae serotype O1 (strain ATCC 39541 / Classical Ogawa 395 / O395)).